Here is a 647-residue protein sequence, read N- to C-terminus: MGPLSARLLMQRGRPKSDRLGKIRSLDLSGLELLSEHLDPKLLCRLTQLQELDLSNNHLETLPDNLGLSHLRVLRCANNQLGDVTALCQFPKLEELSLEGNPFLTVNDNLKVSFLLPTLRKVNGKDASSTYSQVENLNRELTSRVTAHWEKFMATLGPEEEAEKAQADFVKSAVRDVRYGPESLSEFTQWRVRMISEELVAASRTQVQKANSPEKPPEAGAAHKPRARLAALKRPDDVPLSLSPSKRACASPSAQVEGSPVAGSDGSQPAVKLEPLHFLQCHSKNNSPQDLETQLWACAFEPAWEEGATSQTVATCGGEAVCVIDCQTGIVLHKYKAPGEEFFSVAWTALMVVTQAGHKKRWSVLAAAGLRGLVRLLHVRAGFCCGVIRAHKKAIATLCFSPAHETHLFTASYDKRIILWDIGVPNQDYEFQASQLLTLDTTSIPLRLCPVASCPDARLLAGCEGGCCCWDVRLDQPQKRRVCEVEFVFSEGSEASGRRVDGLAFVNEDIVASKGSGLGTICLWSWRQTWGGRGSQSTVAVVVLARLQWSSTELAYFSLSACPDKGIVLCGDEEGNVWLYDVSNILKQPPLLPAALQAPTQILKWPQPWALGQVVTKTMVNTVVANASFTYLTALTDSNIVAIWGRM.

LRR repeat units follow at residues 22–43 (KIRS…PKLL), 48–69 (QLQE…LGLS), 70–91 (HLRV…CQFP), and 92–113 (KLEE…LKVS). Positions 204–267 (RTQVQKANSP…GSPVAGSDGS (64 aa)) are disordered. Serine 212, serine 243, serine 251, serine 259, and serine 264 each carry phosphoserine. 7 WD repeats span residues 282–335 (HSKN…LHKY), 341–379 (EFFS…LLHV), 383–422 (FCCG…LWDI), 426–472 (NQDY…CWDV), 484–526 (EVEF…LWSW), 542–582 (VVLA…LYDV), and 598–646 (APTQ…IWGR).

The protein belongs to the LRWD1 family. As to quaternary structure, integral component of the ORC complex. Directly interacts with CDT1, GMNN and ORC2. Interacts with ORC2 only when non-ubiquitinated; this interaction prevents LRWD1 ubiquitination and degradation. Some of these interactions are regulated in a cell-cycle dependent manner. Interaction with ORC1 occurs predominantly during G1. Association with phosphorylated ORC1 during mitosis is not efficient. Interaction with CDT1 occurs during G1 phase, as well as during mitosis with phosphorylated CDT1. Interaction with GMNN occurs from G1/S to mitosis. Interaction with ORC2 is observed throughout the cell cycle. The stoichiometry of the ORCA/ORC/CDT1/GMNN complex is 1:1:1:2. Interacts with CUL4A and DDB1; this interaction may lead to ubiquitination. Post-translationally, ubiquitinated; undergoes 'Lys-48'-linked polyubiquitination leading to proteasomal degradation. Ubiquitination occurs within the WD repeats at the end of the G1 phase. Ubiquitination may be catalyzed by the CUL4-DDB1 E3 ubiquitin-protein ligase complex and other E3 ligases. Testis-specific. Drastically down-regulated in testis from patients with Sertoli cell-only syndrome (SCOS).

Its subcellular location is the nucleus. It localises to the chromosome. The protein localises to the centromere. The protein resides in the telomere. It is found in the cytoplasm. Its subcellular location is the cytoskeleton. It localises to the microtubule organizing center. The protein localises to the centrosome. The protein resides in the kinetochore. Functionally, required for G1/S transition. Recruits and stabilizes the origin recognition complex (ORC) onto chromatin during G1 to establish pre-replication complex (preRC) and to heterochromatic sites in post-replicated cells. Binds a combination of DNA and histone methylation repressive marks on heterochromatin. Binds histone H3 and H4 trimethylation marks H3K9me3, H3K27me3 and H4K20me3 in a cooperative manner with DNA methylation. Required for silencing of major satellite repeats. May be important ORC2, ORC3 and ORC4 stability. This is Leucine-rich repeat and WD repeat-containing protein 1 (LRWD1) from Homo sapiens (Human).